A 442-amino-acid polypeptide reads, in one-letter code: ATP-dependent protease ATPase subunit HslU (442 aa).

Residues isoleucine 18 and 60–65 (GVGKTE) each bind ATP. The disordered stretch occupies residues 133 to 156 (DALLPKPKNDWDNTDSDTSSNTRQ). ATP-binding residues include aspartate 255, glutamate 320, and arginine 392.

This sequence belongs to the ClpX chaperone family. HslU subfamily. In terms of assembly, a double ring-shaped homohexamer of HslV is capped on each side by a ring-shaped HslU homohexamer. The assembly of the HslU/HslV complex is dependent on binding of ATP.

The protein resides in the cytoplasm. In terms of biological role, ATPase subunit of a proteasome-like degradation complex; this subunit has chaperone activity. The binding of ATP and its subsequent hydrolysis by HslU are essential for unfolding of protein substrates subsequently hydrolyzed by HslV. HslU recognizes the N-terminal part of its protein substrates and unfolds these before they are guided to HslV for hydrolysis. The protein is ATP-dependent protease ATPase subunit HslU of Shewanella sp. (strain ANA-3).